We begin with the raw amino-acid sequence, 326 residues long: Target of rapamycin complex subunit LST8 (326 aa).

M1 is modified (N-acetylmethionine). WD repeat units follow at residues 1 to 37 (MNTS…CTRT), 40 to 80 (HQDS…PIIS), 83 to 122 (GVNK…LQCQ), 126 to 165 (QVNA…NEQL), and 168 to 207 (EPEV…GDEV). Phosphothreonine is present on T51. K86 participates in a covalent cross-link: Glycyl lysine isopeptide (Lys-Gly) (interchain with G-Cter in SUMO3). Residues K215, K245, and K261 each participate in a glycyl lysine isopeptide (Lys-Gly) (interchain with G-Cter in SUMO3) cross-link. Residues 218-257 (AHTRYALQCRFSPDSTLLATCSADQTCKIWRTSNFSLMTE) form a WD 6 repeat. The WD 7 repeat unit spans residues 268 to 309 (SSRGWMWGCAFSGDSQYIVTASSDNLARLWCVETGEIKREYG). Residue K305 forms a Glycyl lysine isopeptide (Lys-Gly) (interchain with G-Cter in SUMO3); alternate linkage. Glycyl lysine isopeptide (Lys-Gly) (interchain with G-Cter in ubiquitin); alternate cross-links involve residues K305 and K313. K313 participates in a covalent cross-link: Glycyl lysine isopeptide (Lys-Gly) (interchain with G-Cter in SUMO1); alternate.

Belongs to the WD repeat LST8 family. Part of the mechanistic target of rapamycin complex 1 (mTORC1) which contains MTOR, MLST8 and RPTOR. mTORC1 associates with AKT1S1/PRAS40, which inhibits its activity. mTORC1 binds to and is inhibited by FKBP12-rapamycin. Within mTORC1, interacts directly with MTOR and RPTOR. Component of the mechanistic target of rapamycin complex 2 (mTORC2), consisting in two heterotretramers composed of MTOR, MLST8, RICTOR and MAPKAP1/SIN1. Contrary to mTORC1, mTORC2 does not bind to and is not sensitive to FKBP12-rapamycin. mTORC1 and mTORC2 associate with DEPTOR, which regulates their activity. Interacts with RHEB. Interacts with MEAK7. Interacts with SIK3. Interacts with SLC38A7; this interaction promotes the recruitment of mTORC1 to the lysosome and its subsequent activation. In terms of processing, phosphorylation at Thr-51 by CDK1 promotes ubiquitination by the SCF(FBXW7) complex, followed by degradation. Ubiquitination by the SCF(FBXW7) and SCF(FBXW11) complexes following phosphorylation at Thr-51 by CDK1, leads to its degradation by the proteasome. Ubiquitination at Lys-305 and Lys-313 by TRAF2 via 'Lys-63'-linked polyubiquitin chains inhibits formation of the mTORC2 complex, while promoting formation of the mTORC1 complex: ubiquitination disrupts the interaction between MLST8 and MAPKAP1/SIN1 to favor mTORC1 assembly. Deubiquitination at Lys-305 and Lys-313 by OTUD7B promotes MLST8 interaction with MAPKAP1/SIN1, facilitating mTORC2 assembly. Post-translationally, sumoylation with SUMO1, SUMO2 and SUMO3 promotes assembly of both mTORC1 and mTORC2 complexes.

It is found in the lysosome membrane. The protein localises to the cytoplasm. Functionally, subunit of both mTORC1 and mTORC2, which regulates cell growth and survival in response to nutrient and hormonal signals. mTORC1 is activated in response to growth factors or amino acids. In response to nutrients, mTORC1 is recruited to the lysosome membrane and promotes protein, lipid and nucleotide synthesis by phosphorylating several substrates, such as ribosomal protein S6 kinase (RPS6KB1 and RPS6KB2) and EIF4EBP1 (4E-BP1). In the same time, it inhibits catabolic pathways by phosphorylating the autophagy initiation components ULK1 and ATG13, as well as transcription factor TFEB, a master regulators of lysosomal biogenesis and autophagy. The mTORC1 complex is inhibited in response to starvation and amino acid depletion. Within mTORC1, MLST8 interacts directly with MTOR and enhances its kinase activity. In nutrient-poor conditions, stabilizes the MTOR-RPTOR interaction and favors RPTOR-mediated inhibition of MTOR activity. As part of the mTORC2 complex, transduces signals from growth factors to pathways involved in proliferation, cytoskeletal organization, lipogenesis and anabolic output. mTORC2 is also activated by growth factors, but seems to be nutrient-insensitive. In response to growth factors, mTORC2 phosphorylates and activates AGC protein kinase family members, including AKT (AKT1, AKT2 and AKT3), PKC (PRKCA, PRKCB and PRKCE) and SGK1. mTORC2 functions upstream of Rho GTPases to regulate the actin cytoskeleton, probably by activating one or more Rho-type guanine nucleotide exchange factors. mTORC2 promotes the serum-induced formation of stress-fibers or F-actin. mTORC2 plays a critical role in AKT1 activation by mediating phosphorylation of different sites depending on the context, such as 'Thr-450', 'Ser-473', 'Ser-477' or 'Thr-479', facilitating the phosphorylation of the activation loop of AKT1 on 'Thr-308' by PDPK1/PDK1 which is a prerequisite for full activation. mTORC2 regulates the phosphorylation of SGK1 at 'Ser-422'. mTORC2 also modulates the phosphorylation of PRKCA on 'Ser-657'. Within mTORC2, MLST8 acts as a bridge between MAPKAP1/SIN1 and MTOR. The sequence is that of Target of rapamycin complex subunit LST8 from Bos taurus (Bovine).